The primary structure comprises 417 residues: NADH-quinone oxidoreductase subunit D (417 aa).

This sequence belongs to the complex I 49 kDa subunit family. As to quaternary structure, NDH-1 is composed of 14 different subunits. Subunits NuoB, C, D, E, F, and G constitute the peripheral sector of the complex.

Its subcellular location is the cell inner membrane. The catalysed reaction is a quinone + NADH + 5 H(+)(in) = a quinol + NAD(+) + 4 H(+)(out). Functionally, NDH-1 shuttles electrons from NADH, via FMN and iron-sulfur (Fe-S) centers, to quinones in the respiratory chain. The immediate electron acceptor for the enzyme in this species is believed to be ubiquinone. Couples the redox reaction to proton translocation (for every two electrons transferred, four hydrogen ions are translocated across the cytoplasmic membrane), and thus conserves the redox energy in a proton gradient. In Ruthia magnifica subsp. Calyptogena magnifica, this protein is NADH-quinone oxidoreductase subunit D.